A 344-amino-acid polypeptide reads, in one-letter code: N-acetyl-gamma-glutamyl-phosphate reductase (344 aa).

The active site involves C148.

The protein belongs to the NAGSA dehydrogenase family. Type 1 subfamily.

The protein localises to the cytoplasm. The enzyme catalyses N-acetyl-L-glutamate 5-semialdehyde + phosphate + NADP(+) = N-acetyl-L-glutamyl 5-phosphate + NADPH + H(+). Its pathway is amino-acid biosynthesis; L-arginine biosynthesis; N(2)-acetyl-L-ornithine from L-glutamate: step 3/4. Its function is as follows. Catalyzes the NADPH-dependent reduction of N-acetyl-5-glutamyl phosphate to yield N-acetyl-L-glutamate 5-semialdehyde. This chain is N-acetyl-gamma-glutamyl-phosphate reductase, found in Clostridium beijerinckii (strain ATCC 51743 / NCIMB 8052) (Clostridium acetobutylicum).